Reading from the N-terminus, the 306-residue chain is Small ribosomal subunit protein uS2 (306 aa).

Residues 229-238 (GEESAAEERP) show a composition bias toward basic and acidic residues. The segment at 229–306 (GEESAAEERP…VGEGDESEER (78 aa)) is disordered. Over residues 261 to 287 (QPGEPEAEAFEEAAGEPEDSTEEEAAE) the composition is skewed to acidic residues.

It belongs to the universal ribosomal protein uS2 family.

The chain is Small ribosomal subunit protein uS2 from Rubrobacter xylanophilus (strain DSM 9941 / JCM 11954 / NBRC 16129 / PRD-1).